Reading from the N-terminus, the 205-residue chain is GTP cyclohydrolase-2 (205 aa).

A GTP-binding site is contributed by 49–53; the sequence is RVHSE. Positions 54, 65, and 67 each coordinate Zn(2+). GTP is bound by residues Gln-70, 92–94, and Thr-114; that span reads EGR. Residue Asp-126 is the Proton acceptor of the active site. Catalysis depends on Arg-128, which acts as the Nucleophile. GTP contacts are provided by Thr-149 and Lys-154.

It belongs to the GTP cyclohydrolase II family. Requires Zn(2+) as cofactor.

It carries out the reaction GTP + 4 H2O = 2,5-diamino-6-hydroxy-4-(5-phosphoribosylamino)-pyrimidine + formate + 2 phosphate + 3 H(+). It functions in the pathway cofactor biosynthesis; riboflavin biosynthesis; 5-amino-6-(D-ribitylamino)uracil from GTP: step 1/4. In terms of biological role, catalyzes the conversion of GTP to 2,5-diamino-6-ribosylamino-4(3H)-pyrimidinone 5'-phosphate (DARP), formate and pyrophosphate. This Pseudomonas syringae pv. tomato (strain ATCC BAA-871 / DC3000) protein is GTP cyclohydrolase-2.